The primary structure comprises 693 residues: Golgin subfamily A member 6B (693 aa).

Residues 1–11 (MWPQPYLPPHP) show a composition bias toward pro residues. Disordered stretches follow at residues 1–72 (MWPQ…SQYQ), 497–551 (LPGE…VERR), 629–650 (NPADEPTPGAPAPQELGAAGEQ), and 660–679 (NNVEPAPGAAREGSPHDNPT). Positions 77–611 (ALESSSVTIS…KLLELQELVL (535 aa)) form a coiled coil. Basic and acidic residues predominate over residues 537–551 (LPKEKADGTEQVERR).

Belongs to the GOLGA6 family.

This chain is Golgin subfamily A member 6B (GOLGA6B), found in Homo sapiens (Human).